The chain runs to 155 residues: Large ribosomal subunit protein bL17 (155 aa).

Belongs to the bacterial ribosomal protein bL17 family. As to quaternary structure, part of the 50S ribosomal subunit. Contacts protein L32.

The sequence is that of Large ribosomal subunit protein bL17 from Bifidobacterium adolescentis (strain ATCC 15703 / DSM 20083 / NCTC 11814 / E194a).